Reading from the N-terminus, the 306-residue chain is Acetyl-coenzyme A carboxylase carboxyl transferase subunit beta (306 aa).

The 270-residue stretch at 25-294 (VWTKCDSCGQ…PQDPLPHEPR (270 aa)) folds into the CoA carboxyltransferase N-terminal domain. Residues cysteine 29, cysteine 32, cysteine 48, and cysteine 51 each coordinate Zn(2+). A C4-type zinc finger spans residues 29–51 (CDSCGQVLYRAELERNLEVCPKC). The interval 281–306 (NRPQPQDPLPHEPRPDAVPEDHQDEV) is disordered. The span at 289 to 306 (LPHEPRPDAVPEDHQDEV) shows a compositional bias: basic and acidic residues.

It belongs to the AccD/PCCB family. Acetyl-CoA carboxylase is a heterohexamer composed of biotin carboxyl carrier protein (AccB), biotin carboxylase (AccC) and two subunits each of ACCase subunit alpha (AccA) and ACCase subunit beta (AccD). It depends on Zn(2+) as a cofactor.

Its subcellular location is the cytoplasm. It carries out the reaction N(6)-carboxybiotinyl-L-lysyl-[protein] + acetyl-CoA = N(6)-biotinyl-L-lysyl-[protein] + malonyl-CoA. Its pathway is lipid metabolism; malonyl-CoA biosynthesis; malonyl-CoA from acetyl-CoA: step 1/1. Its function is as follows. Component of the acetyl coenzyme A carboxylase (ACC) complex. Biotin carboxylase (BC) catalyzes the carboxylation of biotin on its carrier protein (BCCP) and then the CO(2) group is transferred by the transcarboxylase to acetyl-CoA to form malonyl-CoA. This is Acetyl-coenzyme A carboxylase carboxyl transferase subunit beta from Sodalis glossinidius (strain morsitans).